We begin with the raw amino-acid sequence, 248 residues long: tRNA (guanine-N(1)-)-methyltransferase (248 aa).

S-adenosyl-L-methionine-binding positions include glycine 113 and 133 to 138 (IGDYVL).

It belongs to the RNA methyltransferase TrmD family. In terms of assembly, homodimer.

It is found in the cytoplasm. The enzyme catalyses guanosine(37) in tRNA + S-adenosyl-L-methionine = N(1)-methylguanosine(37) in tRNA + S-adenosyl-L-homocysteine + H(+). Specifically methylates guanosine-37 in various tRNAs. This Shewanella piezotolerans (strain WP3 / JCM 13877) protein is tRNA (guanine-N(1)-)-methyltransferase.